The chain runs to 698 residues: Glycine--tRNA ligase beta subunit (698 aa).

The protein belongs to the class-II aminoacyl-tRNA synthetase family. As to quaternary structure, tetramer of two alpha and two beta subunits.

The protein localises to the cytoplasm. It carries out the reaction tRNA(Gly) + glycine + ATP = glycyl-tRNA(Gly) + AMP + diphosphate. The protein is Glycine--tRNA ligase beta subunit of Xanthomonas campestris pv. campestris (strain 8004).